The sequence spans 258 residues: Cobalt-precorrin-4 C(11)-methyltransferase (258 aa).

Belongs to the precorrin methyltransferase family. In terms of assembly, homodimer.

It carries out the reaction Co-precorrin-4 + S-adenosyl-L-methionine = Co-precorrin-5A + S-adenosyl-L-homocysteine + H(+). It participates in cofactor biosynthesis; adenosylcobalamin biosynthesis; cob(II)yrinate a,c-diamide from sirohydrochlorin (anaerobic route): step 4/10. Its function is as follows. Catalyzes the methylation of C-11 in cobalt-precorrin-4 to form cobalt-precorrin-5A. This is Cobalt-precorrin-4 C(11)-methyltransferase (cbiF) from Priestia megaterium (Bacillus megaterium).